Here is a 244-residue protein sequence, read N- to C-terminus: N-(5'-phosphoribosyl)anthranilate isomerase 3, chloroplastic (244 aa).

Residues 1–32 (MSTGISSDLHLHPRALNFSKTSKSGLSNRKVS) constitute a chloroplast transit peptide.

This sequence belongs to the TrpF family.

Its subcellular location is the plastid. The protein localises to the chloroplast. The enzyme catalyses N-(5-phospho-beta-D-ribosyl)anthranilate = 1-(2-carboxyphenylamino)-1-deoxy-D-ribulose 5-phosphate. Its pathway is amino-acid biosynthesis; L-tryptophan biosynthesis; L-tryptophan from chorismate: step 3/5. This is N-(5'-phosphoribosyl)anthranilate isomerase 3, chloroplastic (PAI3) from Arabidopsis thaliana (Mouse-ear cress).